The sequence spans 244 residues: U11/U12 small nuclear ribonucleoprotein 35 kDa protein (244 aa).

The 79-residue stretch at 51-129 (LTLFVARLNL…HEIFVDYELE (79 aa)) folds into the RRM domain. Positions 146–162 (GKKESGQLRFGGRDRPF) are enriched in basic and acidic residues. Positions 146 to 244 (GKKESGQLRF…KSRDKRDRSK (99 aa)) are disordered. A Glycyl lysine isopeptide (Lys-Gly) (interchain with G-Cter in SUMO2) cross-link involves residue Lys-172. Basic and acidic residues-rich tracts occupy residues 173–185 (NEPH…ERRE) and 192–244 (RHWD…DRSK).

As to quaternary structure, component of the U11/U12 snRNPs that are part of the U12-type spliceosome.

It is found in the nucleus. The protein is U11/U12 small nuclear ribonucleoprotein 35 kDa protein (Snrnp35) of Mus musculus (Mouse).